Consider the following 889-residue polypeptide: Protein SEY1 homolog (889 aa).

The Cytoplasmic portion of the chain corresponds to 1–801 (MDTKTQIIDY…ETGAKMSLKN (801 aa)). The region spanning 31–277 (GFNYNVIAIL…IPSDGFAHYC (247 aa)) is the GB1/RHD3-type G domain. Position 41-48 (41-48 (GSQSSGKS)) interacts with GTP. Positions 429–449 (RKDGKGGSSPSAGDKKDTKDT) are disordered. Residues 679-699 (LDEIMDVLKSKLDEISDNLSS) are a coiled coil. A helical membrane pass occupies residues 802-822 (VPLFFWVILLILGWNELLFFT). At 823-825 (RFF) the chain is on the lumenal side. Residues 826–846 (FRLNIILPLFLAAAVILSTLV) form a helical membrane-spanning segment. At 847–889 (FNGNMEVLSIINKAVFFLAKNSFGVYRQLQAMGGKAAQGAAAD) the chain is on the cytoplasmic side.

Belongs to the TRAFAC class dynamin-like GTPase superfamily. GB1/RHD3 GTPase family. RHD3 subfamily.

The protein localises to the endoplasmic reticulum membrane. Functionally, probable GTP-binding protein involved in generating and maintaining the structure of the tubular endoplasmic reticulum network. This chain is Protein SEY1 homolog, found in Plasmodium vivax (strain Salvador I).